Consider the following 85-residue polypeptide: Large ribosomal subunit protein bL27 (85 aa).

This sequence belongs to the bacterial ribosomal protein bL27 family.

This is Large ribosomal subunit protein bL27 from Xylella fastidiosa (strain 9a5c).